The sequence spans 130 residues: Small ribosomal subunit protein uS9 (130 aa).

This sequence belongs to the universal ribosomal protein uS9 family.

The chain is Small ribosomal subunit protein uS9 from Pseudomonas putida (strain W619).